The chain runs to 105 residues: N(4)-acetylcytidine amidohydrolase (105 aa).

The 87-residue stretch at 7 to 93 (TFFERFEHDI…VIAEIYPGLE (87 aa)) folds into the ASCH domain. Lys21 serves as the catalytic Proton acceptor. Thr24 (nucleophile) is an active-site residue. Catalysis depends on Glu74, which acts as the Proton donor.

It belongs to the N(4)-acetylcytidine amidohydrolase family.

It catalyses the reaction N(4)-acetylcytidine + H2O = cytidine + acetate + H(+). The enzyme catalyses N(4)-acetyl-2'-deoxycytidine + H2O = 2'-deoxycytidine + acetate + H(+). The catalysed reaction is N(4)-acetylcytosine + H2O = cytosine + acetate + H(+). Catalyzes the hydrolysis of N(4)-acetylcytidine (ac4C). This chain is N(4)-acetylcytidine amidohydrolase, found in Shewanella baltica (strain OS185).